Here is a 377-residue protein sequence, read N- to C-terminus: Homoserine O-acetyltransferase (377 aa).

The AB hydrolase-1 domain occupies N48–E347. Residue S143 is the Nucleophile of the active site. R213 is a binding site for substrate. Catalysis depends on residues D311 and H341. D342 provides a ligand contact to substrate.

It belongs to the AB hydrolase superfamily. MetX family. In terms of assembly, homodimer.

The protein resides in the cytoplasm. The catalysed reaction is L-homoserine + acetyl-CoA = O-acetyl-L-homoserine + CoA. It participates in amino-acid biosynthesis; L-methionine biosynthesis via de novo pathway; O-acetyl-L-homoserine from L-homoserine: step 1/1. Its function is as follows. Transfers an acetyl group from acetyl-CoA to L-homoserine, forming acetyl-L-homoserine. The protein is Homoserine O-acetyltransferase of Corynebacterium efficiens (strain DSM 44549 / YS-314 / AJ 12310 / JCM 11189 / NBRC 100395).